We begin with the raw amino-acid sequence, 127 residues long: Large ribosomal subunit protein bL12 (127 aa).

This sequence belongs to the bacterial ribosomal protein bL12 family. In terms of assembly, homodimer. Part of the ribosomal stalk of the 50S ribosomal subunit. Forms a multimeric L10(L12)X complex, where L10 forms an elongated spine to which 2 to 4 L12 dimers bind in a sequential fashion. Binds GTP-bound translation factors.

Forms part of the ribosomal stalk which helps the ribosome interact with GTP-bound translation factors. Is thus essential for accurate translation. This Rhizobium etli (strain CIAT 652) protein is Large ribosomal subunit protein bL12.